Reading from the N-terminus, the 459-residue chain is Cysteine--tRNA ligase (459 aa).

Position 28 (Cys-28) interacts with Zn(2+). The 'HIGH' region motif lies at Val-30–His-40. The Zn(2+) site is built by Cys-209, His-234, and Glu-238. A 'KMSKS' region motif is present at residues Lys-266 to Ser-270. Residue Lys-269 participates in ATP binding.

It belongs to the class-I aminoacyl-tRNA synthetase family. As to quaternary structure, monomer. Requires Zn(2+) as cofactor.

It is found in the cytoplasm. It catalyses the reaction tRNA(Cys) + L-cysteine + ATP = L-cysteinyl-tRNA(Cys) + AMP + diphosphate. The protein is Cysteine--tRNA ligase of Vibrio cholerae serotype O1 (strain ATCC 39541 / Classical Ogawa 395 / O395).